A 164-amino-acid polypeptide reads, in one-letter code: MAKNSNKVKKNTNKANNFKLLADNRYAKFQYAISETIEAGIELLGTEVKSIRNGKANLRDGYCSFRDGEILLLNVHISPHKNVGSFFNHDPLRNRKLLLHKKEIIKMKSNTEKKGMTIVPLSLYLKGSWIKLTIGVGKGKKLHDKRQDEKQKSIKKEINSALKR.

Residues 141–164 are disordered; the sequence is KLHDKRQDEKQKSIKKEINSALKR. Residues 145 to 158 show a composition bias toward basic and acidic residues; it reads KRQDEKQKSIKKEI.

It belongs to the SmpB family.

It localises to the cytoplasm. Its function is as follows. Required for rescue of stalled ribosomes mediated by trans-translation. Binds to transfer-messenger RNA (tmRNA), required for stable association of tmRNA with ribosomes. tmRNA and SmpB together mimic tRNA shape, replacing the anticodon stem-loop with SmpB. tmRNA is encoded by the ssrA gene; the 2 termini fold to resemble tRNA(Ala) and it encodes a 'tag peptide', a short internal open reading frame. During trans-translation Ala-aminoacylated tmRNA acts like a tRNA, entering the A-site of stalled ribosomes, displacing the stalled mRNA. The ribosome then switches to translate the ORF on the tmRNA; the nascent peptide is terminated with the 'tag peptide' encoded by the tmRNA and targeted for degradation. The ribosome is freed to recommence translation, which seems to be the essential function of trans-translation. This chain is SsrA-binding protein, found in Prochlorococcus marinus (strain AS9601).